The sequence spans 1218 residues: ABC transporter NFT1 (1218 aa).

Residues M1–P29 lie on the Extracellular side of the membrane. N-linked (GlcNAc...) asparagine glycosylation is present at N4. A helical transmembrane segment spans residues L30 to L50. Topologically, residues R51 to K103 are cytoplasmic. The helical transmembrane segment at F104–M124 threads the bilayer. At P125 to K130 the chain is on the extracellular side. A helical membrane pass occupies residues F131–T151. Residues L152 to R169 are Cytoplasmic-facing. The chain crosses the membrane as a helical span at residues D170–L190. The Extracellular segment spans residues R191–K201. The chain crosses the membrane as a helical span at residues I202–S222. Residues T223–N302 are Cytoplasmic-facing. The chain crosses the membrane as a helical span at residues I303–F323. Residues F311–Q621 enclose the ABC transmembrane type-1 1 domain. The Extracellular portion of the chain corresponds to L324 to S351. Residues L352–L374 traverse the membrane as a helical segment. Topologically, residues G375 to S449 are cytoplasmic. The interval N410–D434 is disordered. The segment covering A424 to D434 has biased composition (basic and acidic residues). Residues E450–M470 form a helical membrane-spanning segment. At I471–F481 the chain is on the extracellular side. The chain crosses the membrane as a helical span at residues A482–Y504. The Cytoplasmic portion of the chain corresponds to Q505–T558. A helical transmembrane segment spans residues I559–F579. The Extracellular segment spans residues S580–K584. A helical membrane pass occupies residues F585 to L605. At R606 to D953 the chain is on the cytoplasmic side. The ABC transporter domain maps to F651 to N892. Position 686 to 693 (G686 to S693) interacts with ATP. Polar residues predominate over residues N892 to Q901. The interval N892 to E926 is disordered. Residues Y954–I974 traverse the membrane as a helical segment. The 258-residue stretch at V961 to S1218 folds into the ABC transmembrane type-1 2 domain. Residues T975–T1013 lie on the Extracellular side of the membrane. Residues Y1014–I1034 form a helical membrane-spanning segment. At S1035–L1082 the chain is on the cytoplasmic side. Residues I1083–Y1105 traverse the membrane as a helical segment. At V1106–Q1109 the chain is on the extracellular side. Residues F1110–S1132 traverse the membrane as a helical segment. The Cytoplasmic portion of the chain corresponds to R1133–R1197. A helical membrane pass occupies residues V1198–S1218.

Belongs to the ABC transporter superfamily. ABCC family. Conjugate transporter (TC 3.A.1.208) subfamily.

It localises to the membrane. The chain is ABC transporter NFT1 (NFT1) from Saccharomyces cerevisiae (strain ATCC 204508 / S288c) (Baker's yeast).